Here is a 379-residue protein sequence, read N- to C-terminus: Anomalous homeobox protein (379 aa).

A DNA-binding region (homeobox) is located at residues 135–196; the sequence is PEGLKSRNFP…NYRRRQRALP (62 aa). A disordered region spans residues 195-283; that stretch reads LPQHMKPAQQ…SKPLDVSGHP (89 aa). Over residues 237-246 the composition is skewed to basic and acidic residues; the sequence is QWSEEREEKG.

The protein resides in the nucleus. The polypeptide is Anomalous homeobox protein (ANHX) (Homo sapiens (Human)).